The chain runs to 167 residues: Leptin (167 aa).

Residues Met-1–Ala-21 form the signal peptide. A disulfide bond links Cys-117 and Cys-167.

The protein belongs to the leptin family.

It localises to the secreted. Key player in the regulation of energy balance and body weight control. Once released into the circulation, has central and peripheral effects by binding LEPR, found in many tissues, which results in the activation of several major signaling pathways. In the hypothalamus, acts as an appetite-regulating factor that induces a decrease in food intake and an increase in energy consumption by inducing anorexinogenic factors and suppressing orexigenic neuropeptides, also regulates bone mass and secretion of hypothalamo-pituitary-adrenal hormones. In the periphery, increases basal metabolism, influences reproductive function, regulates pancreatic beta-cell function and insulin secretion, is pro-angiogenic for endothelial cell and affects innate and adaptive immunity. In the arcuate nucleus of the hypothalamus, activates by depolarization POMC neurons inducing FOS and SOCS3 expression to release anorexigenic peptides and inhibits by hyperpolarization NPY neurons inducing SOCS3 with a consequent reduction on release of orexigenic peptides. In addition to its known satiety inducing effect, has a modulatory role in nutrient absorption. In the intestine, reduces glucose absorption by enterocytes by activating PKC and leading to a sequential activation of p38, PI3K and ERK signaling pathways which exerts an inhibitory effect on glucose absorption. Acts as a growth factor on certain tissues, through the activation of different signaling pathways increases expression of genes involved in cell cycle regulation such as CCND1, via JAK2-STAT3 pathway, or VEGFA, via MAPK1/3 and PI3K-AKT1 pathways. May also play an apoptotic role via JAK2-STAT3 pathway and up-regulation of BIRC5 expression. Pro-angiogenic, has mitogenic activity on vascular endothelial cells and plays a role in matrix remodeling by regulating the expression of matrix metalloproteinases (MMPs) and tissue inhibitors of metalloproteinases (TIMPs). In innate immunity, modulates the activity and function of neutrophils by increasing chemotaxis and the secretion of oxygen radicals. Increases phagocytosis by macrophages and enhances secretion of pro-inflammatory mediators. Increases cytotoxic ability of NK cells. Plays a pro-inflammatory role, in synergy with IL1B, by inducing NOS2 which promotes the production of IL6, IL8 and Prostaglandin E2, through a signaling pathway that involves JAK2, PI3K, MAP2K1/MEK1 and MAPK14/p38. In adaptive immunity, promotes the switch of memory T-cells towards T helper-1 cell immune responses. Increases CD4(+)CD25(-) T-cell proliferation and reduces autophagy during TCR (T-cell receptor) stimulation, through MTOR signaling pathway activation and BCL2 up-regulation. This Felis catus (Cat) protein is Leptin (LEP).